The chain runs to 57 residues: High light-inducible protein HliD (57 aa).

Residues 25 to 30 carry the Chlorophyll-binding motif motif; the sequence is EKLNGR. A helical transmembrane segment spans residues 25-46; sequence EKLNGRAAMVGFLLILVIEYFT.

It belongs to the Hlip family. Probably forms dimers which bind 6 chlorophyll a and 2 beta-carotenoid molecules. Cofractionates in an approximately 50 kDa fraction of the thylakoid membrane with HliC. Does not associate with mature PSII. Purified in several chlorophyll- and carotenoid-containing complexes, including photosystem II (PSII) assembly intermediate complex RCII* (iD1, D1, D2, PsbE, PsbF, PsbI, Ycf39, Ycf48, HliC and HliD) and the Ycf39-Hlip complex (Ycf39, HliC, HliD and pigments).

The protein resides in the cellular thylakoid membrane. Its function is as follows. Involved in photosystem II (PSII) assembly and/or repair under high light stress. Required for binding of chlorophyll and carotenoids by the Ycf39-Hlip complex. The Ycf39-Hlip complex binds D1 at an early stage of PSII assembly along with Ycf48, ribosomes and ChlG, the last enzyme in chlorophyll biosynthesis; it may be involved in chlorophyll reuse and delivery to D1 in the initial stages of PSII assembly. Binds chlorophyll a and beta-carotenoid in a 3:1 stoichiometry in the presence and absence of Yfc39; in the Ycf39-HliC-HliD complex, HliD binds all the pigment. The Ycf39-Hlip complex efficiently quenches chlorophyll fluorescence, contributing to photoprotection. Deletion of 4 to 5 members of the Hlip family suggests the proteins are involved in regulation of chlorophyll biosynthesis, in stabilization of chlorophyll-binding proteins and/or in reuse of chlorophylls, and may regulate tetrapyrrole biosynthesis. Might bind chlorophyll and/or carotenoids in association with HliC (called the ScpBE pair). Functionally, the Hlips might regulate tetrapyrrole biosynthesis, maybe at the level of aminolevulinic acid synthesis and probably stabilize PSII assembly intermediates. This chain is High light-inducible protein HliD (hliD), found in Synechocystis sp. (strain ATCC 27184 / PCC 6803 / Kazusa).